The chain runs to 231 residues: Chromosome partition protein MukE (231 aa).

The disordered stretch occupies residues 204 to 231 (TPEPSQQSLLENPTAEYDEEQTEWEDEA). Acidic residues predominate over residues 219 to 231 (EYDEEQTEWEDEA).

It belongs to the MukE family. Interacts, and probably forms a ternary complex, with MukF and MukB. The complex formation is stimulated by calcium or magnesium.

Its subcellular location is the cytoplasm. It is found in the nucleoid. Its function is as follows. Involved in chromosome condensation, segregation and cell cycle progression. May participate in facilitating chromosome segregation by condensation DNA from both sides of a centrally located replisome during cell division. Probably acts via its interaction with MukB and MukF. The sequence is that of Chromosome partition protein MukE from Vibrio cholerae serotype O1 (strain ATCC 39315 / El Tor Inaba N16961).